The primary structure comprises 895 residues: Serine-rich coiled-coil domain-containing protein 1 (895 aa).

4 disordered regions span residues 1–142, 154–177, 332–394, and 459–497; these read MGDS…KEPS, SGRS…KQST, ELHS…RTLG, and RSSS…SSKM. Residues 43–56 show a composition bias toward low complexity; it reads SSSPSSTNSSSGST. The segment covering 83 to 102 has biased composition (polar residues); sequence TEQNLSISNGAQPSHSNMQK. Residues 131-142 are compositionally biased toward basic and acidic residues; sequence LTEDFEREKEPS. Residues 348–358 are compositionally biased toward polar residues; the sequence is SLQSTELSVGN. A coiled-coil region spans residues 675-705; it reads MLRLQLKDRDELISQLQAELEKVQHLQKAFA. The interval 731 to 753 is disordered; the sequence is QGGRETTHRNRTMSQSHSTRDRK.

The protein belongs to the CCSER family.

This is Serine-rich coiled-coil domain-containing protein 1 (Ccser1) from Mus musculus (Mouse).